An 87-amino-acid chain; its full sequence is Large ribosomal subunit protein bL31B (87 aa).

It belongs to the bacterial ribosomal protein bL31 family. Type B subfamily. Part of the 50S ribosomal subunit.

The sequence is that of Large ribosomal subunit protein bL31B from Halorhodospira halophila (strain DSM 244 / SL1) (Ectothiorhodospira halophila (strain DSM 244 / SL1)).